We begin with the raw amino-acid sequence, 298 residues long: Protease HtpX homolog (298 aa).

2 helical membrane passes run 14 to 34 and 39 to 59; these read VVLL…AGYL and YAMG…SMIF. H143 lines the Zn(2+) pocket. E144 is a catalytic residue. Residue H147 coordinates Zn(2+). 2 consecutive transmembrane segments (helical) span residues 158–178 and 197–217; these read IAVA…RMLW and IITL…ASLI. A Zn(2+)-binding site is contributed by E226.

This sequence belongs to the peptidase M48B family. Zn(2+) is required as a cofactor.

Its subcellular location is the cell membrane. The polypeptide is Protease HtpX homolog (Streptococcus pyogenes serotype M28 (strain MGAS6180)).